Reading from the N-terminus, the 129-residue chain is Large ribosomal subunit protein uL22 (129 aa).

It belongs to the universal ribosomal protein uL22 family. As to quaternary structure, part of the 50S ribosomal subunit.

In terms of biological role, this protein binds specifically to 23S rRNA; its binding is stimulated by other ribosomal proteins, e.g. L4, L17, and L20. It is important during the early stages of 50S assembly. It makes multiple contacts with different domains of the 23S rRNA in the assembled 50S subunit and ribosome. The globular domain of the protein is located near the polypeptide exit tunnel on the outside of the subunit, while an extended beta-hairpin is found that lines the wall of the exit tunnel in the center of the 70S ribosome. The polypeptide is Large ribosomal subunit protein uL22 (Rhizobium meliloti (strain 1021) (Ensifer meliloti)).